Consider the following 371-residue polypeptide: Cytochrome b (371 aa).

4 helical membrane passes run phenylalanine 25 to valine 45, tryptophan 69 to isoleucine 90, tryptophan 105 to leucine 125, and phenylalanine 170 to isoleucine 190. Residues histidine 75 and histidine 89 each coordinate heme b. Histidine 174 and histidine 188 together coordinate heme b. Histidine 193 is a binding site for a ubiquinone. The next 4 helical transmembrane spans lie at histidine 218–phenylalanine 238, leucine 280–histidine 300, leucine 312–threonine 332, and phenylalanine 339–proline 358.

The protein belongs to the cytochrome b family. In terms of assembly, the cytochrome bc1 complex contains 3 respiratory subunits (MT-CYB, CYC1 and UQCRFS1), 2 core proteins (UQCRC1 and UQCRC2) and probably 6 low-molecular weight proteins. Requires heme b as cofactor.

It is found in the mitochondrion inner membrane. In terms of biological role, component of the ubiquinol-cytochrome c reductase complex (complex III or cytochrome b-c1 complex) that is part of the mitochondrial respiratory chain. The b-c1 complex mediates electron transfer from ubiquinol to cytochrome c. Contributes to the generation of a proton gradient across the mitochondrial membrane that is then used for ATP synthesis. In Apodora papuana (Papuan olive python), this protein is Cytochrome b (MT-CYB).